Here is a 434-residue protein sequence, read N- to C-terminus: UDP-N-acetylglucosamine 1-carboxyvinyltransferase (434 aa).

22–23 lines the phosphoenolpyruvate pocket; it reads KN. A UDP-N-acetyl-alpha-D-glucosamine-binding site is contributed by arginine 99. Cysteine 123 (proton donor) is an active-site residue. Position 123 is a 2-(S-cysteinyl)pyruvic acid O-phosphothioketal (cysteine 123). Residues 128–132, aspartate 317, and isoleucine 339 each bind UDP-N-acetyl-alpha-D-glucosamine; that span reads RPVDQ.

It belongs to the EPSP synthase family. MurA subfamily.

Its subcellular location is the cytoplasm. It carries out the reaction phosphoenolpyruvate + UDP-N-acetyl-alpha-D-glucosamine = UDP-N-acetyl-3-O-(1-carboxyvinyl)-alpha-D-glucosamine + phosphate. It participates in cell wall biogenesis; peptidoglycan biosynthesis. Cell wall formation. Adds enolpyruvyl to UDP-N-acetylglucosamine. This Paracidovorax citrulli (strain AAC00-1) (Acidovorax citrulli) protein is UDP-N-acetylglucosamine 1-carboxyvinyltransferase.